Consider the following 123-residue polypeptide: Modulator protein MzrA (123 aa).

Over 1–8 (MIKRPRWQ) the chain is Cytoplasmic. Residues 9-29 (YVLLIALALLALATLLVPCMV) traverse the membrane as a helical segment. Residues 30-123 (RTESELRIRA…EFARAPLNLG (94 aa)) are Periplasmic-facing.

This sequence belongs to the MzrA family. As to quaternary structure, interacts with EnvZ.

It is found in the cell inner membrane. Modulates the activity of the EnvZ/OmpR two-component regulatory system, probably by directly modulating EnvZ enzymatic activity and increasing stability of phosphorylated OmpR. The sequence is that of Modulator protein MzrA from Serratia proteamaculans (strain 568).